Consider the following 210-residue polypeptide: Pyridoxine/pyridoxamine 5'-phosphate oxidase (210 aa).

Substrate-binding positions include 7 to 10 (REDY) and Lys-65. Residues 60-65 (RMVLLK), 75-76 (FT), Arg-81, Lys-82, and Gln-104 each bind FMN. The substrate site is built by Tyr-122, Arg-126, and Ser-130. FMN-binding positions include 139–140 (QS) and Trp-183. 189–191 (RLH) serves as a coordination point for substrate. Arg-193 serves as a coordination point for FMN.

It belongs to the pyridoxamine 5'-phosphate oxidase family. Homodimer. It depends on FMN as a cofactor.

It catalyses the reaction pyridoxamine 5'-phosphate + O2 + H2O = pyridoxal 5'-phosphate + H2O2 + NH4(+). The catalysed reaction is pyridoxine 5'-phosphate + O2 = pyridoxal 5'-phosphate + H2O2. The protein operates within cofactor metabolism; pyridoxal 5'-phosphate salvage; pyridoxal 5'-phosphate from pyridoxamine 5'-phosphate: step 1/1. It participates in cofactor metabolism; pyridoxal 5'-phosphate salvage; pyridoxal 5'-phosphate from pyridoxine 5'-phosphate: step 1/1. In terms of biological role, catalyzes the oxidation of either pyridoxine 5'-phosphate (PNP) or pyridoxamine 5'-phosphate (PMP) into pyridoxal 5'-phosphate (PLP). The protein is Pyridoxine/pyridoxamine 5'-phosphate oxidase of Neisseria meningitidis serogroup C (strain 053442).